The sequence spans 255 residues: MSQEFLARILEQKAREVEQMKLEQIQPLRQTYRLAEFLKNHQDCLQVIAEVKKASPSLGDINLDVDIVQQAQTYEENGAVMISVLTDEVFFKGHLDYLREISSQVEIPTLNKDFIIDEKQIIRARNAGATVILLIVAALSEERLKELYDYATELGLEVLVETHNLAELEVAHRLGAEIIGVNNRNLTTFEVDLQTSVDLAPYFEEGRYYISESAIFTGQDAERLAPYFNGILVGTALMQAENVAQRIKELQIDKG.

Belongs to the TrpC family.

It carries out the reaction 1-(2-carboxyphenylamino)-1-deoxy-D-ribulose 5-phosphate + H(+) = (1S,2R)-1-C-(indol-3-yl)glycerol 3-phosphate + CO2 + H2O. It participates in amino-acid biosynthesis; L-tryptophan biosynthesis; L-tryptophan from chorismate: step 4/5. This is Indole-3-glycerol phosphate synthase from Streptococcus pneumoniae (strain Taiwan19F-14).